The sequence spans 314 residues: MTSQKLSLQDIILTLQQYWANQGANLMQAYDNEVGAGTQSPYTFLRANGPEPWHAAYVQPSRRPADGRYGDNPNRLFQHHQFQVVMKPSPDNIQELYLGSLEALGIKPLEHDIRFVEDNWENPSMGAAGIGWEVWLDGMEVTQFTYFQQVGGIEVDSVTAEVTYGLERLASYIQDVPTVYDLDWGNGVLYGDIFKEPEYEHSKYAFEASDQAMLLRHFDDFEKEATRLLDLGLVHPAYDYILKSSHTFNLLDASGSVSVTERAGYLHRIRTMARRVSKVFIDERAKLGFPLLKDDDLREIYLGEHGKYTLTEEN.

It belongs to the class-II aminoacyl-tRNA synthetase family. As to quaternary structure, tetramer of two alpha and two beta subunits.

It is found in the cytoplasm. It carries out the reaction tRNA(Gly) + glycine + ATP = glycyl-tRNA(Gly) + AMP + diphosphate. The chain is Glycine--tRNA ligase alpha subunit from Leuconostoc citreum (strain KM20).